The primary structure comprises 91 residues: Long neurotoxin OH-56 (91 aa).

Residues 1 to 21 (MKTLLLTLVVVTIMCLDLGYT) form the signal peptide. Intrachain disulfides connect Cys-24–Cys-42, Cys-35–Cys-63, Cys-48–Cys-52, Cys-67–Cys-78, and Cys-79–Cys-84.

The protein belongs to the three-finger toxin family. Long-chain subfamily. Type II alpha-neurotoxin sub-subfamily. In terms of tissue distribution, expressed by the venom gland.

The protein resides in the secreted. Its function is as follows. Binds with high affinity to muscular (alpha-1/CHRNA1) and neuronal (alpha-7/CHRNA7) nicotinic acetylcholine receptor (nAChR) and inhibits acetylcholine from binding to the receptor, thereby impairing neuromuscular and neuronal transmission. The sequence is that of Long neurotoxin OH-56 from Ophiophagus hannah (King cobra).